The primary structure comprises 521 residues: Anthranilate synthase component 1 (521 aa).

Residues T40 and 292 to 294 (PYM) contribute to the L-tryptophan site. A chorismate-binding site is contributed by 329-330 (GT). E362 is a binding site for Mg(2+). Chorismate-binding positions include Y450, R470, 484–486 (GAG), and G486. Position 499 (E499) interacts with Mg(2+).

Belongs to the anthranilate synthase component I family. Heterotetramer consisting of two non-identical subunits: a beta subunit (TrpG) and a large alpha subunit (TrpE). Requires Mg(2+) as cofactor.

The catalysed reaction is chorismate + L-glutamine = anthranilate + pyruvate + L-glutamate + H(+). The protein operates within amino-acid biosynthesis; L-tryptophan biosynthesis; L-tryptophan from chorismate: step 1/5. Feedback inhibited by tryptophan. Part of a heterotetrameric complex that catalyzes the two-step biosynthesis of anthranilate, an intermediate in the biosynthesis of L-tryptophan. In the first step, the glutamine-binding beta subunit (TrpG) of anthranilate synthase (AS) provides the glutamine amidotransferase activity which generates ammonia as a substrate that, along with chorismate, is used in the second step, catalyzed by the large alpha subunit of AS (TrpE) to produce anthranilate. In the absence of TrpG, TrpE can synthesize anthranilate directly from chorismate and high concentrations of ammonia. The protein is Anthranilate synthase component 1 (trpE) of Buchnera aphidicola subsp. Acyrthosiphon pisum (strain APS) (Acyrthosiphon pisum symbiotic bacterium).